The following is a 769-amino-acid chain: Glutathione biosynthesis bifunctional protein GshAB (769 aa).

Residues 1–347 (MLDSFKEDPK…QLADENENNI (347 aa)) are glutamate--cysteine ligase. The region spanning 514–768 (KLVLAEHDIR…IGDKILDFLF (255 aa)) is the ATP-grasp domain. 541 to 599 (SLFEDKQIVVKPKSTNYGWGISIFKNKFTLEDYQEALNIAFSYDSSVIIEEFIPGDEFR) lines the ATP pocket. Mg(2+)-binding residues include Asp-721, Glu-738, and Asn-740. Mn(2+) contacts are provided by Asp-721, Glu-738, and Asn-740.

The protein in the N-terminal section; belongs to the glutamate--cysteine ligase type 1 family. Type 2 subfamily. In terms of assembly, monomer. Mg(2+) is required as a cofactor. Requires Mn(2+) as cofactor.

The catalysed reaction is L-cysteine + L-glutamate + ATP = gamma-L-glutamyl-L-cysteine + ADP + phosphate + H(+). It carries out the reaction gamma-L-glutamyl-L-cysteine + glycine + ATP = glutathione + ADP + phosphate + H(+). The protein operates within sulfur metabolism; glutathione biosynthesis; glutathione from L-cysteine and L-glutamate: step 1/2. It participates in sulfur metabolism; glutathione biosynthesis; glutathione from L-cysteine and L-glutamate: step 2/2. Functionally, synthesizes glutathione from L-glutamate and L-cysteine via gamma-L-glutamyl-L-cysteine. The chain is Glutathione biosynthesis bifunctional protein GshAB from Listeria monocytogenes serotype 4b (strain F2365).